The chain runs to 1089 residues: PALM2-AKAP2 fusion protein (1089 aa).

Positions 70–107 (SEEDEFKVKQLEDNIQRLEQEIQALESEESQISAKEQI) form a coiled coil. Disordered stretches follow at residues 165–194 (SEDANQLRSKQDNCGDSRLEPAASSLSPDH), 210–231 (PGVTSTPHSKDHSSPFYSPSHN), and 289–362 (PAHS…SRDG). The segment covering 173 to 183 (SKQDNCGDSRL) has biased composition (basic and acidic residues). Phosphoserine occurs at positions 315 and 318. Residues 317–328 (PSDRMAEGERAN) are compositionally biased toward basic and acidic residues. The segment covering 329–347 (GHSTDQPQDLLGNSLQAPA) has biased composition (polar residues). Ser348 is modified (phosphoserine). Over residues 348 to 357 (SPSSSTSSHC) the composition is skewed to low complexity. Lys370 is covalently cross-linked (Glycyl lysine isopeptide (Lys-Gly) (interchain with G-Cter in SUMO1); alternate). Residue Lys370 forms a Glycyl lysine isopeptide (Lys-Gly) (interchain with G-Cter in SUMO2); alternate linkage. The segment at 429–517 (KNPGIAAKWW…LSTSQPCTAP (89 aa)) is disordered. Residues 455-470 (LESHRKYKERKEKRAQ) show a composition bias toward basic and acidic residues. Residues 471–508 (QEQLQLQQQQQQQLQQQQLQQQQLQQQQLQQQLQQQQL) are compositionally biased toward low complexity. Ser553 is subject to Phosphoserine. The disordered stretch occupies residues 592–644 (TVGGTLEDGGTQAAKEQKAPCVSESQSAGAGPANAATQGKEGPYSEPSKRGPL). A phosphoserine mark is found at Ser678, Ser682, and Ser734. The segment covering 712-749 (FSMDNISDSGASNETPSALQENSLADFSLPQTPQTDNP) has biased composition (polar residues). 3 disordered regions span residues 712–783 (FSMD…DPLE), 800–899 (EQVD…YFSK), and 915–934 (TQESDVMVGPFKLRSRKQRT). Thr743 carries the phosphothreonine modification. Residues 782 to 795 (LEYQAGLLVQNAIQ) are PKA-RII subunit binding domain. Positions 801–814 (QVDKAEAHTSKEGS) are enriched in basic and acidic residues. Phosphoserine is present on Ser847. Basic and acidic residues predominate over residues 850–871 (QEKRDILPKNLPAEDRALREKG). A coiled-coil region spans residues 928–958 (RSRKQRTLSMIEEEIRAAQEREEELKRQRQV). Ser936, Ser964, Ser995, and Ser1002 each carry phosphoserine. The segment at 946 to 1021 (QEREEELKRQ…AAGTQRPKNL (76 aa)) is disordered.

Highly expressed in lung and weakly in thymus and cerebellum. Little or no expression in liver, heart and cerebral cortex. All isoforms are expressed in lung, but KL2A and KL2B isoforms are the principal isoforms in cerebellum.

It localises to the apical cell membrane. Functionally, binds to regulatory subunit (RII) of protein kinase A. May be involved in establishing polarity in signaling systems or in integrating PKA-RII isoforms with downstream effectors to capture, amplify and focus diffuse, trans-cellular signals carried by cAMP. Binds tp and modulates the structure of the actin cytoskeleton. This is PALM2-AKAP2 fusion protein from Mus musculus (Mouse).